We begin with the raw amino-acid sequence, 372 residues long: Maltose/maltodextrin import ATP-binding protein MalK (372 aa).

Residues 4 to 234 (VSLRNVGKSY…PANRFVAGFI (231 aa)) enclose the ABC transporter domain. 36-43 (GPSGCGKS) contacts ATP.

Belongs to the ABC transporter superfamily. Maltooligosaccharide importer (TC 3.A.1.1.1) family. As to quaternary structure, the complex is composed of two ATP-binding proteins (MalK), two transmembrane proteins (MalG and MalK) and a solute-binding protein (MalE).

It localises to the cell inner membrane. The catalysed reaction is D-maltose(out) + ATP + H2O = D-maltose(in) + ADP + phosphate + H(+). Functionally, part of the ABC transporter complex MalEFGK involved in maltose/maltodextrin import. Responsible for energy coupling to the transport system. The protein is Maltose/maltodextrin import ATP-binding protein MalK of Mannheimia succiniciproducens (strain KCTC 0769BP / MBEL55E).